Reading from the N-terminus, the 63-residue chain is Large ribosomal subunit protein bL32 (63 aa).

Disordered stretches follow at residues 1–25 (MAVP…LTTP) and 42–63 (VSPK…QNND). Residues 7–20 (KTSKQKKRSRRGHI) show a composition bias toward basic residues. Residues 54–63 (ANENKQQNND) are compositionally biased toward polar residues.

The protein belongs to the bacterial ribosomal protein bL32 family.

This chain is Large ribosomal subunit protein bL32, found in Lactobacillus johnsonii (strain CNCM I-12250 / La1 / NCC 533).